Here is a 275-residue protein sequence, read N- to C-terminus: Chemotaxis protein methyltransferase Cher2 (275 aa).

The CheR-type methyltransferase domain occupies 1–275 (MSTGNLDFEQ…CSPGIIYQAK (275 aa)). S-adenosyl-L-methionine is bound by residues N73, T75, R79, E116, D145, 201-202 (NL), and 218-219 (RN).

Monomer.

It carries out the reaction L-glutamyl-[protein] + S-adenosyl-L-methionine = [protein]-L-glutamate 5-O-methyl ester + S-adenosyl-L-homocysteine. Its function is as follows. Methylation of the membrane-bound methyl-accepting chemotaxis proteins (MCP) to form gamma-glutamyl methyl ester residues in MCP. Methylates the McpS chemotaxis receptor. This is Chemotaxis protein methyltransferase Cher2 (cheR2) from Pseudomonas putida (strain ATCC 47054 / DSM 6125 / CFBP 8728 / NCIMB 11950 / KT2440).